The primary structure comprises 308 residues: Nuclear transcription factor Y subunit A-5 (308 aa).

Over residues 1–10 the composition is skewed to basic and acidic residues; that stretch reads MQVFQRKEDS. Disordered stretches follow at residues 1 to 26 and 49 to 71; these read MQVF…IQGS and GLQL…GGGE. A compositionally biased stretch (polar residues) spans 11-26; it reads SWGNSMPTTNSNIQGS. A Subunit association domain (SAD) motif is present at residues 181–204; that stretch reads FVNAKQYHAILRRRKHRAKLEAQN. Residues 211-236 constitute a DNA-binding region (NFYA/HAP2-type); sequence KPYLHESRHLHALKRARGSGGRFLNT. The interval 251 to 273 is disordered; sequence MANGQNFSMSPHGGGSGIGSSSI.

It belongs to the NFYA/HAP2 subunit family. Heterotrimeric transcription factor composed of three components, NF-YA, NF-YB and NF-YC. NF-YB and NF-YC must interact and dimerize for NF-YA association and DNA binding. As to expression, expressed in the whole plant, except roots. Present in etiolated seedlings.

Its subcellular location is the nucleus. In terms of biological role, stimulates the transcription of various genes by recognizing and binding to a CCAAT motif in promoters. Involved in the blue light (BL) and abscisic acid (ABA) signaling pathways. The protein is Nuclear transcription factor Y subunit A-5 (NFYA5) of Arabidopsis thaliana (Mouse-ear cress).